The chain runs to 128 residues: Probable 4-amino-4-deoxy-L-arabinose-phosphoundecaprenol flippase subunit ArnF (128 aa).

The Cytoplasmic segment spans residues 1–2; sequence MG. A helical transmembrane segment spans residues 3-23; it reads LIWGLFSVIIASVAQLSLGFA. The Periplasmic segment spans residues 24 to 35; that stretch reads ASHLPPMTHLWD. Residues 36 to 56 traverse the membrane as a helical segment; sequence FIAALLAFGLDARILLLGLLG. At 57–76 the chain is on the cytoplasmic side; the sequence is YLLSVFCWYKTLHKLALSKA. A helical membrane pass occupies residues 77-97; the sequence is YALLSMSYVLVWIASMVLPGW. Residues 98–100 are Periplasmic-facing; it reads EGT. Residues 101–121 traverse the membrane as a helical segment; sequence FSLKALLGVACIMSGLMLIFL. The Cytoplasmic segment spans residues 122-128; sequence PTTKQRY.

It belongs to the ArnF family. Heterodimer of ArnE and ArnF.

It is found in the cell inner membrane. It functions in the pathway bacterial outer membrane biogenesis; lipopolysaccharide biosynthesis. Functionally, translocates 4-amino-4-deoxy-L-arabinose-phosphoundecaprenol (alpha-L-Ara4N-phosphoundecaprenol) from the cytoplasmic to the periplasmic side of the inner membrane. This Shigella boydii serotype 4 (strain Sb227) protein is Probable 4-amino-4-deoxy-L-arabinose-phosphoundecaprenol flippase subunit ArnF.